The primary structure comprises 320 residues: Cytochrome f (320 aa).

The signal sequence occupies residues 1–35; that stretch reads MHTKNLFYSRTQQITQYLSALLMMVILTRTSISSA. The heme site is built by Tyr-36, Cys-56, Cys-59, and His-60. Residues 286 to 306 traverse the membrane as a helical segment; the sequence is VQVLLFFFASIILAQIFLVLK.

Belongs to the cytochrome f family. In terms of assembly, the 4 large subunits of the cytochrome b6-f complex are cytochrome b6, subunit IV (17 kDa polypeptide, petD), cytochrome f and the Rieske protein, while the 4 small subunits are PetG, PetL, PetM and PetN. The complex functions as a dimer. The cofactor is heme.

It is found in the plastid thylakoid membrane. In terms of biological role, component of the cytochrome b6-f complex, which mediates electron transfer between photosystem II (PSII) and photosystem I (PSI), cyclic electron flow around PSI, and state transitions. This Cuscuta gronovii (Common dodder) protein is Cytochrome f.